The sequence spans 635 residues: Threonine--tRNA ligase (635 aa).

Residues 1–61 enclose the TGS domain; that stretch reads MINISFPDGS…EHDCKLRILT (61 aa). The interval 242–533 is catalytic; it reads DHRKIGKELD…LIEEYAGKFP (292 aa). Positions 333, 384, and 510 each coordinate Zn(2+).

This sequence belongs to the class-II aminoacyl-tRNA synthetase family. In terms of assembly, homodimer. The cofactor is Zn(2+).

The protein localises to the cytoplasm. It catalyses the reaction tRNA(Thr) + L-threonine + ATP = L-threonyl-tRNA(Thr) + AMP + diphosphate + H(+). Functionally, catalyzes the attachment of threonine to tRNA(Thr) in a two-step reaction: L-threonine is first activated by ATP to form Thr-AMP and then transferred to the acceptor end of tRNA(Thr). Also edits incorrectly charged L-seryl-tRNA(Thr). This is Threonine--tRNA ligase from Rickettsia typhi (strain ATCC VR-144 / Wilmington).